The chain runs to 60 residues: Ixodegrin-like peptide (60 aa).

Residues 1–21 (MNAAFIAALLILGALTLDAMA) form the signal peptide. The Cell attachment site motif lies at 49–51 (RGD).

Belongs to the ixodegrin family. In terms of processing, contains 3 disulfide bonds. Expressed in salivary glands.

It localises to the secreted. Tick salivary platelet aggregation inhibitor that plays an important part in the anti-hemostatic strategy of ticks. Inhibits platelet aggregation induced by ADP, thrombin and thromboxane A2 (TXA2). Blocks platelet adhesion to soluble collagen (most probably through the binding to alpha-2/beta-1 integrin (ITGA2/ITGB1)) and binds to purified glycoprotein IIb/IIIa (ITGA2B/ITGB3) in a dose-dependent manner. In vivo, reduces thrombus weight effectively in a rat arteriovenous shunt model and inhibits thrombosis in a carrageenan-induced mouse tail thrombosis model. This Ixodes scapularis (Black-legged tick) protein is Ixodegrin-like peptide.